We begin with the raw amino-acid sequence, 436 residues long: GTPase Der (436 aa).

EngA-type G domains lie at 4–167 and 175–351; these read PVVA…PKDA and IKFS…DNHE. Residues 10-17, 57-61, 119-122, 181-188, 229-233, and 294-297 contribute to the GTP site; these read GRPNVGKS, DTGGI, NKVD, DTAGI, and NKWD. A KH-like domain is found at 352 to 436; the sequence is QRISSAVLND…PIHIIERRRK (85 aa).

It belongs to the TRAFAC class TrmE-Era-EngA-EngB-Septin-like GTPase superfamily. EngA (Der) GTPase family. Associates with the 50S ribosomal subunit.

Functionally, GTPase that plays an essential role in the late steps of ribosome biogenesis. The protein is GTPase Der of Ligilactobacillus salivarius (strain UCC118) (Lactobacillus salivarius).